The chain runs to 159 residues: RNA pyrophosphohydrolase (159 aa).

The Nudix hydrolase domain occupies 6–149 (GFRPNVGIIL…KREVYRRALK (144 aa)). The short motif at 38–59 (GGINDRETPEEALYRELNEEVG) is the Nudix box element.

The protein belongs to the Nudix hydrolase family. RppH subfamily. It depends on a divalent metal cation as a cofactor.

Its function is as follows. Accelerates the degradation of transcripts by removing pyrophosphate from the 5'-end of triphosphorylated RNA, leading to a more labile monophosphorylated state that can stimulate subsequent ribonuclease cleavage. This Pseudomonas aeruginosa (strain LESB58) protein is RNA pyrophosphohydrolase.